Consider the following 185-residue polypeptide: Ribosome-recycling factor (185 aa).

The interval Ala138 to Gly185 is disordered.

This sequence belongs to the RRF family.

The protein localises to the cytoplasm. Functionally, responsible for the release of ribosomes from messenger RNA at the termination of protein biosynthesis. May increase the efficiency of translation by recycling ribosomes from one round of translation to another. In Lactobacillus delbrueckii subsp. bulgaricus (strain ATCC 11842 / DSM 20081 / BCRC 10696 / JCM 1002 / NBRC 13953 / NCIMB 11778 / NCTC 12712 / WDCM 00102 / Lb 14), this protein is Ribosome-recycling factor.